Consider the following 270-residue polypeptide: Tryptophan synthase alpha chain (270 aa).

Catalysis depends on proton acceptor residues E49 and D60.

Belongs to the TrpA family. Tetramer of two alpha and two beta chains.

The catalysed reaction is (1S,2R)-1-C-(indol-3-yl)glycerol 3-phosphate + L-serine = D-glyceraldehyde 3-phosphate + L-tryptophan + H2O. It participates in amino-acid biosynthesis; L-tryptophan biosynthesis; L-tryptophan from chorismate: step 5/5. Its function is as follows. The alpha subunit is responsible for the aldol cleavage of indoleglycerol phosphate to indole and glyceraldehyde 3-phosphate. The protein is Tryptophan synthase alpha chain of Pseudomonas fluorescens (strain ATCC BAA-477 / NRRL B-23932 / Pf-5).